Consider the following 352-residue polypeptide: Ion-translocating oxidoreductase complex subunit D (352 aa).

A run of 4 helical transmembrane segments spans residues 20 to 40, 42 to 62, 89 to 109, and 123 to 143; these read IMLL…CFFG, GTLV…ALVL, IPPL…VIIA, and PAMI…TSWL. Thr-187 is subject to FMN phosphoryl threonine. 5 consecutive transmembrane segments (helical) span residues 215 to 235, 242 to 262, 267 to 287, 301 to 321, and 322 to 342; these read LAGA…VWLL, WHIP…GWLF, LAAP…FFIL, LIFG…GGYP, and DGVA…DYYT.

This sequence belongs to the NqrB/RnfD family. As to quaternary structure, the complex is composed of six subunits: RsxA, RsxB, RsxC, RsxD, RsxE and RsxG. FMN serves as cofactor.

It localises to the cell inner membrane. Part of a membrane-bound complex that couples electron transfer with translocation of ions across the membrane. Required to maintain the reduced state of SoxR. This chain is Ion-translocating oxidoreductase complex subunit D, found in Escherichia coli O7:K1 (strain IAI39 / ExPEC).